The primary structure comprises 601 residues: Glutathione-regulated potassium-efflux system protein KefB (601 aa).

A run of 13 helical transmembrane segments spans residues 4 to 24 (SDLL…VPLA), 29 to 49 (IGAV…GLGF), 55 to 75 (EILH…GLEL), 87 to 107 (IFGV…GLLM), 115 to 135 (AAVV…LQLM), 152 to 172 (VLLF…LLAG), 177 to 197 (HVNW…LIGG), 207 to 227 (FIAS…LVLG), 230 to 250 (LFME…GVLL), 268 to 288 (GLLL…GVLY), 291 to 311 (LLWV…VLYL), 326 to 346 (FAGV…LPAS), and 356 to 376 (ALLL…MKGI). Positions 400–519 (KPQVIIVGFG…AGVTQFSRET (120 aa)) constitute an RCK N-terminal domain.

The protein belongs to the monovalent cation:proton antiporter 2 (CPA2) transporter (TC 2.A.37) family. KefB subfamily. As to quaternary structure, interacts with the regulatory subunit KefG.

Its subcellular location is the cell inner membrane. Its function is as follows. Pore-forming subunit of a potassium efflux system that confers protection against electrophiles. Catalyzes K(+)/H(+) antiport. This Klebsiella pneumoniae (strain 342) protein is Glutathione-regulated potassium-efflux system protein KefB.